Here is a 509-residue protein sequence, read N- to C-terminus: DNA primase DnaG (509 aa).

Residues 167-253 form the Toprim domain; sequence DAIVVVEGRA…CVEDLARHEV (87 aa). The Mg(2+) site is built by E173, D215, and D217. Positions 267-411 are disordered; it reads KQAASDDADP…ASTDEQPKTL (145 aa). Composition is skewed to low complexity over residues 313-331 and 383-402; these read PVSS…ETAA and ESTA…AAGA.

It belongs to the archaeal DnaG primase family. Forms a ternary complex with MCM helicase and DNA. Mg(2+) serves as cofactor.

The catalysed reaction is ssDNA + n NTP = ssDNA/pppN(pN)n-1 hybrid + (n-1) diphosphate.. In terms of biological role, RNA polymerase that catalyzes the synthesis of short RNA molecules used as primers for DNA polymerase during DNA replication. In Natronomonas pharaonis (strain ATCC 35678 / DSM 2160 / CIP 103997 / JCM 8858 / NBRC 14720 / NCIMB 2260 / Gabara) (Halobacterium pharaonis), this protein is DNA primase DnaG.